A 170-amino-acid polypeptide reads, in one-letter code: MEFKNYIEIVEDWPKEGIKFKDITPLMADGKAFKSAVDEIVDYANTKEIDLVVGPEARGFIVGCPVSYALEVGFAPVRKEGKLPREVIKVDYGLEYGENVLTIHKDAIKPGQRVLITDDLLATGGTIEATIKLVEQLGGIVVGCAFLVELGYLDGKDKLEGYDVLTLMKY.

This sequence belongs to the purine/pyrimidine phosphoribosyltransferase family. Homodimer.

It localises to the cytoplasm. The catalysed reaction is AMP + diphosphate = 5-phospho-alpha-D-ribose 1-diphosphate + adenine. The protein operates within purine metabolism; AMP biosynthesis via salvage pathway; AMP from adenine: step 1/1. Catalyzes a salvage reaction resulting in the formation of AMP, that is energically less costly than de novo synthesis. The polypeptide is Adenine phosphoribosyltransferase (Oceanobacillus iheyensis (strain DSM 14371 / CIP 107618 / JCM 11309 / KCTC 3954 / HTE831)).